The sequence spans 89 residues: Large ribosomal subunit protein bL31B (89 aa).

Belongs to the bacterial ribosomal protein bL31 family. Type B subfamily. In terms of assembly, part of the 50S ribosomal subunit.

The protein is Large ribosomal subunit protein bL31B of Pseudomonas fluorescens (strain ATCC BAA-477 / NRRL B-23932 / Pf-5).